The following is a 904-amino-acid chain: NADH-quinone oxidoreductase subunit G (904 aa).

The 83-residue stretch at 1–83 (MATIHVDGKE…GSWISIDDEE (83 aa)) folds into the 2Fe-2S ferredoxin-type domain. [2Fe-2S] cluster contacts are provided by cysteine 34, cysteine 45, cysteine 48, and cysteine 67. The 40-residue stretch at 83 to 122 (EAKVFRASVVEWLMTNHPHDCPVCEEGGHCHLQDMTVMTG) folds into the 4Fe-4S His(Cys)3-ligated-type domain. Positions 99, 103, 106, 112, 151, 154, 157, 201, 228, 231, 235, and 263 each coordinate [4Fe-4S] cluster. The region spanning 221-277 (MQFSPSICHGCSSGCNISPGERYGELRRIENRFNGSVNQYFLCDRGRFGYGYVNRKD) is the 4Fe-4S Mo/W bis-MGD-type domain.

This sequence belongs to the complex I 75 kDa subunit family. In terms of assembly, composed of 13 different subunits. Subunits NuoCD, E, F, and G constitute the peripheral sector of the complex. It depends on [2Fe-2S] cluster as a cofactor. [4Fe-4S] cluster is required as a cofactor.

The enzyme catalyses a quinone + NADH + 5 H(+)(in) = a quinol + NAD(+) + 4 H(+)(out). NDH-1 shuttles electrons from NADH, via FMN and iron-sulfur (Fe-S) centers, to quinones in the respiratory chain. The immediate electron acceptor for the enzyme in this species is believed to be ubiquinone. Couples the redox reaction to proton translocation (for every two electrons transferred, four hydrogen ions are translocated across the cytoplasmic membrane), and thus conserves the redox energy in a proton gradient. Required for plants roots colonization. This chain is NADH-quinone oxidoreductase subunit G (nuoG), found in Pseudomonas fluorescens.